The sequence spans 551 residues: Glucans biosynthesis protein D (551 aa).

The tat-type signal signal peptide spans 1–32; sequence MNRRRFIKASLALAAACGTPGLATLFSRNAWA.

Belongs to the OpgD/OpgG family. In terms of processing, predicted to be exported by the Tat system. The position of the signal peptide cleavage has not been experimentally proven.

It localises to the periplasm. Its pathway is glycan metabolism; osmoregulated periplasmic glucan (OPG) biosynthesis. Its function is as follows. Probably involved in the control of the structural glucose backbone of osmoregulated periplasmic glucans (OPGs). This chain is Glucans biosynthesis protein D, found in Cronobacter sakazakii (strain ATCC BAA-894) (Enterobacter sakazakii).